The primary structure comprises 163 residues: MALNLQDKQAIVAEVNEAAKGALSAVVADSRGVTVEKMTELRKSAREAGVTMRVVRNTLLRRAVEGTEFECLTDTFTGPTLIAFSNEHPGAAARLFTEFAKTNKEFELKGAAFEGKVQNVEFLATLPTYEEAIARLMGTMKEAAAGKLVRTFAALRDKLQEAA.

The protein belongs to the universal ribosomal protein uL10 family. As to quaternary structure, part of the ribosomal stalk of the 50S ribosomal subunit. The N-terminus interacts with L11 and the large rRNA to form the base of the stalk. The C-terminus forms an elongated spine to which L12 dimers bind in a sequential fashion forming a multimeric L10(L12)X complex.

Its function is as follows. Forms part of the ribosomal stalk, playing a central role in the interaction of the ribosome with GTP-bound translation factors. The protein is Large ribosomal subunit protein uL10 of Haemophilus ducreyi (strain 35000HP / ATCC 700724).